We begin with the raw amino-acid sequence, 239 residues long: Protein NtpR (239 aa).

Residues 12-239 (LIRATDTFQG…GLFDFFVQEF (228 aa)) form the Glutamine amidotransferase type-1 domain. The active-site Nucleophile is the Cys113. Residues His217 and Glu219 contribute to the active site.

The protein is Protein NtpR (ntpR) of Enterococcus hirae (strain ATCC 9790 / DSM 20160 / JCM 8729 / LMG 6399 / NBRC 3181 / NCIMB 6459 / NCDO 1258 / NCTC 12367 / WDCM 00089 / R).